Here is a 206-residue protein sequence, read N- to C-terminus: Pyridoxine/pyridoxamine 5'-phosphate oxidase (206 aa).

FMN contacts are provided by residues 53–58 (RMVLLK), 68–69 (YT), Lys75, and Gln97. Lys58 contributes to the substrate binding site. 3 residues coordinate substrate: Tyr115, Arg119, and Ser123. Residues 132 to 133 (QS) and Trp177 each bind FMN. 183 to 185 (RLH) is a substrate binding site. FMN is bound at residue Arg187.

It belongs to the pyridoxamine 5'-phosphate oxidase family. As to quaternary structure, homodimer. Requires FMN as cofactor.

The catalysed reaction is pyridoxamine 5'-phosphate + O2 + H2O = pyridoxal 5'-phosphate + H2O2 + NH4(+). It carries out the reaction pyridoxine 5'-phosphate + O2 = pyridoxal 5'-phosphate + H2O2. Its pathway is cofactor metabolism; pyridoxal 5'-phosphate salvage; pyridoxal 5'-phosphate from pyridoxamine 5'-phosphate: step 1/1. It participates in cofactor metabolism; pyridoxal 5'-phosphate salvage; pyridoxal 5'-phosphate from pyridoxine 5'-phosphate: step 1/1. Catalyzes the oxidation of either pyridoxine 5'-phosphate (PNP) or pyridoxamine 5'-phosphate (PMP) into pyridoxal 5'-phosphate (PLP). In Rhizobium leguminosarum bv. trifolii (strain WSM2304), this protein is Pyridoxine/pyridoxamine 5'-phosphate oxidase.